A 289-amino-acid polypeptide reads, in one-letter code: Probable porphobilinogen deaminase (289 aa).

The residue at position 234 (Cys-234) is an S-(dipyrrolylmethanemethyl)cysteine.

Belongs to the HMBS family. The cofactor is dipyrromethane.

The catalysed reaction is 4 porphobilinogen + H2O = hydroxymethylbilane + 4 NH4(+). It participates in porphyrin-containing compound metabolism; protoporphyrin-IX biosynthesis; coproporphyrinogen-III from 5-aminolevulinate: step 2/4. Functionally, tetrapolymerization of the monopyrrole PBG into the hydroxymethylbilane pre-uroporphyrinogen in several discrete steps. The chain is Probable porphobilinogen deaminase (hemC) from Archaeoglobus fulgidus (strain ATCC 49558 / DSM 4304 / JCM 9628 / NBRC 100126 / VC-16).